Consider the following 445-residue polypeptide: tRNA-2-methylthio-N(6)-dimethylallyladenosine synthase (445 aa).

Residues 7–121 enclose the MTTase N-terminal domain; that stretch reads KHFYIKSFGC…LPELIEKAAS (115 aa). Residues cysteine 16, cysteine 52, cysteine 84, cysteine 156, cysteine 160, and cysteine 163 each coordinate [4Fe-4S] cluster. The region spanning 142–374 is the Radical SAM core domain; sequence RQVGASAFLT…QALLNQQQFD (233 aa). One can recognise a TRAM domain in the interval 377–438; it reads QQTIGRKATV…PNSVKGQFLD (62 aa).

It belongs to the methylthiotransferase family. MiaB subfamily. In terms of assembly, monomer. Requires [4Fe-4S] cluster as cofactor.

The protein localises to the cytoplasm. It catalyses the reaction N(6)-dimethylallyladenosine(37) in tRNA + (sulfur carrier)-SH + AH2 + 2 S-adenosyl-L-methionine = 2-methylsulfanyl-N(6)-dimethylallyladenosine(37) in tRNA + (sulfur carrier)-H + 5'-deoxyadenosine + L-methionine + A + S-adenosyl-L-homocysteine + 2 H(+). Functionally, catalyzes the methylthiolation of N6-(dimethylallyl)adenosine (i(6)A), leading to the formation of 2-methylthio-N6-(dimethylallyl)adenosine (ms(2)i(6)A) at position 37 in tRNAs that read codons beginning with uridine. The chain is tRNA-2-methylthio-N(6)-dimethylallyladenosine synthase from Zymomonas mobilis subsp. mobilis (strain ATCC 31821 / ZM4 / CP4).